The chain runs to 238 residues: Tetrahydromethanopterin S-methyltransferase subunit A 1 (238 aa).

Topologically, residues 2-218 (VEKKSPAEGW…RMFAGMYSGK (217 aa)) are cytoplasmic. His84 is a binding site for 5-hydroxybenzimidazolylcob(I)amide. The helical transmembrane segment at 219–237 (VQGIMIGLAFTLTLGILLL) threads the bilayer. Residue Val238 is a topological domain, extracellular.

It belongs to the MtrA family. In terms of assembly, the complex is composed of 8 subunits; MtrA, MtrB, MtrC, MtrD, MtrE, MtrF, MtrG and MtrH. The cofactor is 5-hydroxybenzimidazolylcob(I)amide.

It localises to the cell membrane. It catalyses the reaction 5-methyl-5,6,7,8-tetrahydromethanopterin + coenzyme M + 2 Na(+)(in) = 5,6,7,8-tetrahydromethanopterin + methyl-coenzyme M + 2 Na(+)(out). It functions in the pathway one-carbon metabolism; methanogenesis from CO(2); methyl-coenzyme M from 5,10-methylene-5,6,7,8-tetrahydromethanopterin: step 2/2. In terms of biological role, part of a complex that catalyzes the formation of methyl-coenzyme M and tetrahydromethanopterin from coenzyme M and methyl-tetrahydromethanopterin. This is an energy-conserving, sodium-ion translocating step. The polypeptide is Tetrahydromethanopterin S-methyltransferase subunit A 1 (Methanothermobacter thermautotrophicus (strain ATCC 29096 / DSM 1053 / JCM 10044 / NBRC 100330 / Delta H) (Methanobacterium thermoautotrophicum)).